The chain runs to 476 residues: MGIKFLEVIKPFCAVLPEIQKPERKIQFREKVLWTAITLFIFLVCCQIPLFGIMSSDSADPFYWMRVILASNRGTLMELGISPIVTSGLIMQLLAGAKIIEVGDTPKDRALFNGAQKLFGMIITIGQAIVYVMTGMYGDPSEMGAGICLLIIIQLFVAGLIVLLLDELLQKGYGLGSGISLFIATNICETIVWKAFSPTTVNTGRGTEFEGAIIALFHLLATRTDKVRALREAFYRQNLPNILNLIATVFVFAVVIYFQGFRVDLPIKSARYRGQYNTYPIKLFYTSNIPIILQSALVSNLYVISQMLSTRFSGNFLVNLLGTWSDATSGGPARAYPVAGLCYYLSPPESFGSVLDDPVHAAIYIVFMLGSCAFFSKTWIEVSGSSAKDVAKQLKEQQMVMRGHRETSMVHELNRYIPTAAAFGGLCIGGLSVMADFLGAIGSGTGILLAVTIIYQYFEIFVKEQSEMGSMGALLF.

Residues 2–33 lie on the Cytoplasmic side of the membrane; sequence GIKFLEVIKPFCAVLPEIQKPERKIQFREKVL. A helical transmembrane segment spans residues 34–53; the sequence is WTAITLFIFLVCCQIPLFGI. Residues 54 to 76 lie on the Lumenal side of the membrane; sequence MSSDSADPFYWMRVILASNRGTL. Residues 77–96 traverse the membrane as a helical segment; it reads MELGISPIVTSGLIMQLLAG. The Cytoplasmic segment spans residues 97–117; it reads AKIIEVGDTPKDRALFNGAQK. Residues 118–138 traverse the membrane as a helical segment; that stretch reads LFGMIITIGQAIVYVMTGMYG. The Lumenal portion of the chain corresponds to 139-144; the sequence is DPSEMG. A helical transmembrane segment spans residues 145-165; it reads AGICLLIIIQLFVAGLIVLLL. The Cytoplasmic segment spans residues 166–172; the sequence is DELLQKG. The helical transmembrane segment at 173 to 193 threads the bilayer; the sequence is YGLGSGISLFIATNICETIVW. Residues 194–240 are Lumenal-facing; the sequence is KAFSPTTVNTGRGTEFEGAIIALFHLLATRTDKVRALREAFYRQNLP. The chain crosses the membrane as a helical span at residues 241–261; sequence NILNLIATVFVFAVVIYFQGF. Residues 262 to 288 are Cytoplasmic-facing; the sequence is RVDLPIKSARYRGQYNTYPIKLFYTSN. A helical membrane pass occupies residues 289–309; it reads IPIILQSALVSNLYVISQMLS. The Lumenal segment spans residues 310–354; the sequence is TRFSGNFLVNLLGTWSDATSGGPARAYPVAGLCYYLSPPESFGSV. The chain crosses the membrane as a helical span at residues 355 to 375; sequence LDDPVHAAIYIVFMLGSCAFF. The Cytoplasmic portion of the chain corresponds to 376 to 420; that stretch reads SKTWIEVSGSSAKDVAKQLKEQQMVMRGHRETSMVHELNRYIPTA. A helical membrane pass occupies residues 421 to 441; it reads AAFGGLCIGGLSVMADFLGAI. Over 442–445 the chain is Lumenal; that stretch reads GSGT. A helical transmembrane segment spans residues 446 to 462; it reads GILLAVTIIYQYFEIFV. Topologically, residues 463 to 476 are cytoplasmic; the sequence is KEQSEMGSMGALLF.

Belongs to the SecY/SEC61-alpha family. In terms of assembly, the SEC61 channel-forming translocon complex consists of channel-forming core components SEC61A1, SEC61B and SEC61G and different auxiliary components such as SEC62 and SEC63. The SEC61 channel associates with the multi-pass translocon (MPT) complex.

Its subcellular location is the endoplasmic reticulum membrane. Component of SEC61 channel-forming translocon complex that mediates transport of signal peptide-containing precursor polypeptides across the endoplasmic reticulum (ER). Forms a ribosome receptor and a gated pore in the ER membrane, both functions required for cotranslational translocation of nascent polypeptides. May cooperate with auxiliary protein SEC62, SEC63 and HSPA5/BiP to enable post-translational transport of small presecretory proteins. The SEC61 channel is also involved in ER membrane insertion of transmembrane proteins: it mediates membrane insertion of the first few transmembrane segments of proteins, while insertion of subsequent transmembrane regions of multi-pass membrane proteins is mediated by the multi-pass translocon (MPT) complex. This is Protein transport protein Sec61 subunit alpha (sec61a) from Dissostichus mawsoni (Antarctic cod).